The sequence spans 341 residues: Hyaluronan and proteoglycan link protein 2 (341 aa).

Residues 1 to 27 form the signal peptide; the sequence is MPSWIPLPAFCCLLLPWAFTVFHKTLG. Residues 35–143 enclose the Ig-like V-type domain; the sequence is PHYLLPPIHE…GIEDESVALT (109 aa). Disulfide bonds link C58–C129, C171–C241, C195–C216, C266–C337, and C291–C312. Link domains are found at residues 149–243 and 246–339; these read VVFP…FCFT and LAGQ…YCYA.

It belongs to the HAPLN family. In terms of tissue distribution, brain.

Its subcellular location is the secreted. The protein resides in the extracellular space. It localises to the extracellular matrix. In terms of biological role, mediates a firm binding of versican V2 to hyaluronic acid. May play a pivotal role in the formation of the hyaluronan-associated matrix in the central nervous system (CNS) which facilitates neuronal conduction and general structural stabilization. Binds to hyaluronic acid. This Rattus norvegicus (Rat) protein is Hyaluronan and proteoglycan link protein 2 (Hapln2).